A 182-amino-acid polypeptide reads, in one-letter code: Transcription antitermination protein NusB (182 aa).

Residues 159 to 182 form a disordered region; it reads TPVENSEAEAAGYPVEESIEEDSQ.

It belongs to the NusB family.

Its function is as follows. Involved in transcription antitermination. Required for transcription of ribosomal RNA (rRNA) genes. Binds specifically to the boxA antiterminator sequence of the ribosomal RNA (rrn) operons. The polypeptide is Transcription antitermination protein NusB (Corynebacterium diphtheriae (strain ATCC 700971 / NCTC 13129 / Biotype gravis)).